The following is a 31-amino-acid chain: Cytochrome b6-f complex subunit 6 (31 aa).

Residues 3–23 (VFLGYIIFLAAFFGLATGLFL) traverse the membrane as a helical segment.

The protein belongs to the PetL family. In terms of assembly, the 4 large subunits of the cytochrome b6-f complex are cytochrome b6, subunit IV (17 kDa polypeptide, PetD), cytochrome f and the Rieske protein, while the 4 small subunits are PetG, PetL, PetM and PetN. The complex functions as a dimer.

Its subcellular location is the plastid. The protein localises to the chloroplast thylakoid membrane. Its function is as follows. Component of the cytochrome b6-f complex, which mediates electron transfer between photosystem II (PSII) and photosystem I (PSI), cyclic electron flow around PSI, and state transitions. PetL is important for photoautotrophic growth as well as for electron transfer efficiency and stability of the cytochrome b6-f complex. The polypeptide is Cytochrome b6-f complex subunit 6 (Pyropia yezoensis (Susabi-nori)).